Consider the following 31-residue polypeptide: Histone H1.3 (31 aa).

Belongs to the histone H1/H5 family.

The protein resides in the nucleus. It localises to the chromosome. Functionally, histones H1 are necessary for the condensation of nucleosome chains into higher-order structures. This Triticum aestivum (Wheat) protein is Histone H1.3.